A 123-amino-acid chain; its full sequence is Small ribosomal subunit protein uS12 (123 aa).

Asp-90 carries the 3-methylthioaspartic acid modification.

It belongs to the universal ribosomal protein uS12 family. Part of the 30S ribosomal subunit. Contacts proteins S8 and S17. May interact with IF1 in the 30S initiation complex.

Its function is as follows. With S4 and S5 plays an important role in translational accuracy. Functionally, interacts with and stabilizes bases of the 16S rRNA that are involved in tRNA selection in the A site and with the mRNA backbone. Located at the interface of the 30S and 50S subunits, it traverses the body of the 30S subunit contacting proteins on the other side and probably holding the rRNA structure together. The combined cluster of proteins S8, S12 and S17 appears to hold together the shoulder and platform of the 30S subunit. This is Small ribosomal subunit protein uS12 from Ehrlichia ruminantium (strain Gardel).